A 1429-amino-acid chain; its full sequence is Alpha-agarase (1429 aa).

The first 26 residues, 1–26 (MFKTKRSLLNSSIAISFAVLGVQAQA), serve as a signal peptide directing secretion. CBM6 domains are found at residues 29-161 (LELQ…FRLT) and 211-345 (FVIQ…LTFT). Disordered stretches follow at residues 349–400 (SDGG…DGVS) and 474–495 (NTPAGTQVDASGCETDNGGEPG). Residues 369–378 (SSDSCPNTPT) show a composition bias toward polar residues. Residues 490-638 (NGGEPGDSYY…GGTNFVHPSN (149 aa)) form the PA14 domain. The 132-residue stretch at 662–793 (IYIQLEDFDE…QWSGDLVRLA (132 aa)) folds into the CBM6 3 domain.

This sequence belongs to the glycosyl hydrolase 96 family. As to quaternary structure, homodimer. Requires Ca(2+) as cofactor.

The enzyme catalyses Endohydrolysis of 1,3-alpha-L-galactosidic linkages in agarose, yielding agarotetraose as the major product.. Alpha-agarase. Does not hydrolyze agarotetraose, agarohexaose, kappa-carrageenan, iota-carrageenan or lambda-carrageenan. The chain is Alpha-agarase from Alteromonas agarilytica.